A 336-amino-acid chain; its full sequence is Quinolinate synthase (336 aa).

Residues His25 and Ser42 each contribute to the iminosuccinate site. Residue Cys86 coordinates [4Fe-4S] cluster. Iminosuccinate-binding positions include 117 to 119 and Ser138; that span reads YIN. Residue Cys198 coordinates [4Fe-4S] cluster. Residues 224 to 226 and Thr241 each bind iminosuccinate; that span reads HPE. Cys288 lines the [4Fe-4S] cluster pocket.

It belongs to the quinolinate synthase family. Type 3 subfamily. The cofactor is [4Fe-4S] cluster.

It is found in the cytoplasm. It carries out the reaction iminosuccinate + dihydroxyacetone phosphate = quinolinate + phosphate + 2 H2O + H(+). The protein operates within cofactor biosynthesis; NAD(+) biosynthesis; quinolinate from iminoaspartate: step 1/1. Its function is as follows. Catalyzes the condensation of iminoaspartate with dihydroxyacetone phosphate to form quinolinate. The polypeptide is Quinolinate synthase (Helicobacter pylori (strain HPAG1)).